The following is a 373-amino-acid chain: Innexin shaking-B (373 aa).

Over Met1–Ser21 the chain is Cytoplasmic. A helical transmembrane segment spans residues Pro22–Val42. At Thr43–Lys106 the chain is on the extracellular side. A helical transmembrane segment spans residues Ile107–Thr127. Residues Pro128 to Asn176 are Cytoplasmic-facing. Residues Trp177–Leu199 traverse the membrane as a helical segment. At Met200–Lys268 the chain is on the extracellular side. The helical transmembrane segment at Ile269 to Phe289 threads the bilayer. Topologically, residues Tyr290 to Ala373 are cytoplasmic.

The protein belongs to the pannexin family. In terms of assembly, monomer.

The protein localises to the cell membrane. Its subcellular location is the cell junction. It localises to the gap junction. Functionally, structural component of the gap junctions at electrical synapses in distal and mid-depth levels in the lamina. The protein is Innexin shaking-B of Anopheles gambiae (African malaria mosquito).